The chain runs to 1051 residues: Serine/threonine-protein kinase ULK1 (1051 aa).

A Protein kinase domain is found at 16 to 278 (FSRKDLIGHG…FDEFFHHPFL (263 aa)). Residues 22 to 30 (IGHGAFAVV) and Lys-46 contribute to the ATP site. Residue Asp-138 is the Proton acceptor of the active site. Lys-162 carries the N6-acetyllysine modification. Disordered stretches follow at residues 283 to 323 (PIKK…EMPQ), 335 to 358 (AGFL…DDFV), and 394 to 554 (GLES…CRLH). Positions 287–416 (SPPVPVPSYP…TCSSSPSPSG (130 aa)) are interaction with GABARAP and GABARAPL2. 3 stretches are compositionally biased toward low complexity: residues 295–318 (YPSS…PPSL), 340–349 (GSRDSGGSSK), and 400–423 (RTPS…PFSS). Phosphoserine; by AMPK is present on Ser-317. Phosphoserine is present on residues Ser-403 and Ser-450. The segment covering 437-459 (QVHNYQRIEQNLQSPTQQQTARS) has biased composition (polar residues). Thr-456 is modified (phosphothreonine). Residues Ser-467, Ser-477, Ser-479, and Ser-521 each carry the phosphoserine modification. The residue at position 555 (Ser-555) is a Phosphoserine; by AMPK. Thr-574 is modified (phosphothreonine). Lys-606 carries the N6-acetyllysine modification. Residue Thr-635 is modified to Phosphothreonine. Ser-637 is subject to Phosphoserine; by AMPK. At Ser-638 the chain carries Phosphoserine. Disordered regions lie at residues 661 to 686 (PDLS…DTRG) and 727 to 787 (APSA…TGSS). Over residues 731 to 745 (GFGGTLHPGARGGGA) the composition is skewed to gly residues. At Ser-757 the chain carries Phosphoserine; by MTOR. Ser-774 is modified (phosphoserine). Residues 774–787 (SVGSSSSLGSTGSS) are compositionally biased toward low complexity. Ser-777 carries the post-translational modification Phosphoserine; by AMPK. The interval 829–1051 (PDLPEETLME…LSALLSGVYA (223 aa)) is C-terminal domain; mediates interaction with SESN2.

The protein belongs to the protein kinase superfamily. Ser/Thr protein kinase family. APG1/unc-51/ULK1 subfamily. Interacts with GABARAP and GABARAPL2. Interacts (via C-terminus) with ATG13. Part of a complex consisting of ATG13, ATG101, ULK1 and RB1CC1. Associates with the mammalian target of rapamycin complex 1 (mTORC1) through an interaction with RPTOR; the association depends on nutrient conditions and is reduced during starvation. Interacts with FEZ1; SCOC interferes with FEZ1-binding. Interacts with TBC1D14. Interacts (phosphorylated form) with TRIM5. When phosphorylated at Ser-317, interacts with MEFV and BECN1 simultaneously. Interacts with TRIM21 and IRF3, in the presence of TRIM21. Interacts with SESN2. Interacts with SQSTM1. Interacts with C9orf72. Interacts with WDR45. Interacts with ATG13; this interaction is increased in the absence of TMEM39A. Interacts with WIPI2. Interacts with ATP2A2. Interacts with AMBRA1. Interacts with Irgm1; promoting the coassembly of ULK1 and BECN1. In terms of processing, autophosphorylated. Phosphorylated under nutrient-rich conditions; dephosphorylated during starvation or following treatment with rapamycin. In response to nutrient limitation, phosphorylated and activated by AMPK, leading to activate autophagy. Under nutrient sufficiency, phosphorylated by MTOR/mTOR, disrupting the interaction with AMPK and preventing activation of ULK1. Post-translationally, ubiquitinated via 'Lys-63'-linkage by a complex composed of AMBRA1 and TRAF6 following autophagy induction, promoting ULK1 stability and kinase activity. Deubiquitinated by USP20; leading to ULK1 stability and autophagy initiation. Acetylated by KAT5/TIP60 under autophagy induction, promoting protein kinase activity.

The protein resides in the cytoplasm. It is found in the cytosol. Its subcellular location is the preautophagosomal structure. The catalysed reaction is L-seryl-[protein] + ATP = O-phospho-L-seryl-[protein] + ADP + H(+). It catalyses the reaction L-threonyl-[protein] + ATP = O-phospho-L-threonyl-[protein] + ADP + H(+). Its activity is regulated as follows. Acetylation by KAT5/TIP60 stimulates the protein kinase activity. The protein kinase activity is activated by unanchored 'Lys-63'-linked polyubiquitin chains: unanchored 'Lys-63'-linked polyubiquitin chains are catalyzed by TRIM32 in an AMBRA1-dependent manner. Functionally, serine/threonine-protein kinase involved in autophagy in response to starvation. Acts upstream of phosphatidylinositol 3-kinase PIK3C3 to regulate the formation of autophagophores, the precursors of autophagosomes. Part of regulatory feedback loops in autophagy: acts both as a downstream effector and negative regulator of mammalian target of rapamycin complex 1 (mTORC1) via interaction with RPTOR. Activated via phosphorylation by AMPK and also acts as a regulator of AMPK by mediating phosphorylation of AMPK subunits PRKAA1, PRKAB2 and PRKAG1, leading to negatively regulate AMPK activity. May phosphorylate ATG13/KIAA0652 and RPTOR; however such data need additional evidences. Plays a role early in neuronal differentiation and is required for granule cell axon formation. Also phosphorylates SESN2 and SQSTM1 to regulate autophagy. Phosphorylates FLCN, promoting autophagy. Phosphorylates AMBRA1 in response to autophagy induction, releasing AMBRA1 from the cytoskeletal docking site to induce autophagosome nucleation. Phosphorylates ATG4B, leading to inhibit autophagy by decreasing both proteolytic activation and delipidation activities of ATG4B. The polypeptide is Serine/threonine-protein kinase ULK1 (Ulk1) (Mus musculus (Mouse)).